We begin with the raw amino-acid sequence, 807 residues long: Protein FAR1-RELATED SEQUENCE 2 (807 aa).

Residues Y52–P138 enclose the FAR1 domain. Residues V219–S315 form the MULE domain. An SWIM-type zinc finger spans residues F499–D535. Positions E660–A680 form a coiled coil. Residues G788–S798 show a composition bias toward polar residues. The segment at G788–N807 is disordered.

It belongs to the FHY3/FAR1 family. As to expression, expressed in hypocotyls, rosette and cauline leaves, inflorescences stems, flowers and siliques.

Its subcellular location is the nucleus. Putative transcription activator involved in regulating light control of development. The polypeptide is Protein FAR1-RELATED SEQUENCE 2 (FRS2) (Arabidopsis thaliana (Mouse-ear cress)).